We begin with the raw amino-acid sequence, 267 residues long: Hydroxynaphthalene reductase-like protein Arp2 (267 aa).

Positions 25, 45, 71, and 98 each coordinate NADP(+). Catalysis depends on proton donor residues S147 and S148. The NADP(+) site is built by Y162, K166, V195, and T197. The active-site Proton acceptor is Y162. K166 functions as the Lowers pKa of active site Tyr in the catalytic mechanism.

This sequence belongs to the short-chain dehydrogenases/reductases (SDR) family.

In terms of biological role, hydroxynaphthalene reductase-like protein; part of the Pks2 gene cluster that mediates the formation of infectious structures (appressoria), enabling these fungi to kill insects faster. The product of the Pks2 gene cluster is different from the one of Pks1 and has still not been identified. This chain is Hydroxynaphthalene reductase-like protein Arp2, found in Metarhizium guizhouense (strain ARSEF 977).